The chain runs to 441 residues: Ribulose bisphosphate carboxylase large chain (441 aa).

The residue at position 5 (lysine 5) is an N6,N6,N6-trimethyllysine. Substrate is bound at residue threonine 164. Lysine 166 functions as the Proton acceptor in the catalytic mechanism. Lysine 168 is a substrate binding site. Mg(2+) is bound by residues lysine 192, aspartate 194, and glutamate 195. The residue at position 192 (lysine 192) is an N6-carboxylysine. Histidine 285 serves as the catalytic Proton acceptor. Arginine 286, histidine 318, and serine 370 together coordinate substrate.

The protein belongs to the RuBisCO large chain family. Type I subfamily. Heterohexadecamer of 8 large chains and 8 small chains; disulfide-linked. The disulfide link is formed within the large subunit homodimers. Mg(2+) serves as cofactor. The disulfide bond which can form in the large chain dimeric partners within the hexadecamer appears to be associated with oxidative stress and protein turnover.

It is found in the plastid. The protein localises to the chloroplast. It carries out the reaction 2 (2R)-3-phosphoglycerate + 2 H(+) = D-ribulose 1,5-bisphosphate + CO2 + H2O. It catalyses the reaction D-ribulose 1,5-bisphosphate + O2 = 2-phosphoglycolate + (2R)-3-phosphoglycerate + 2 H(+). RuBisCO catalyzes two reactions: the carboxylation of D-ribulose 1,5-bisphosphate, the primary event in carbon dioxide fixation, as well as the oxidative fragmentation of the pentose substrate in the photorespiration process. Both reactions occur simultaneously and in competition at the same active site. The sequence is that of Ribulose bisphosphate carboxylase large chain from Hemionitis engywookii (Fendler's false cloak fern).